We begin with the raw amino-acid sequence, 553 residues long: Fusion glycoprotein F0 (553 aa).

Positions 1-31 (MGPRPSTKNPTPMMLTVRVALVLSCICPANS) are cleaved as a signal peptide. Residues 32-500 (IDGRPLAAAG…VNVKLTSTSA (469 aa)) are Extracellular-facing. 3 cysteine pairs are disulfide-bonded: Cys76–Cys199, Cys338–Cys347, and Cys362–Cys370. Asn85 is a glycosylation site (N-linked (GlcNAc...) asparagine; by host). The tract at residues 117–141 (FIGAIIGGVALGVATAAQITAAAAL) is fusion peptide. Residues 142 to 170 (IQAKQNAANILRLKESIAATNEAVHEVTD) adopt a coiled-coil conformation. N-linked (GlcNAc...) asparagine; by host glycosylation occurs at Asn191. Asn366, Asn447, and Asn471 each carry an N-linked (GlcNAc...) asparagine; by host glycan. A coiled-coil region spans residues 466–491 (ELGNVNNSISNALNKLEESNSKLDKV). A helical membrane pass occupies residues 501–521 (LITYIVLTIISLVFGILSLVL). Residues 522–553 (ACYLMYKQKAQQKTLLWLGNNTLDQMRATTKM) are Cytoplasmic-facing. Cys523 carries the S-palmitoyl cysteine; by host lipid modification.

Belongs to the paramyxoviruses fusion glycoprotein family. In terms of assembly, homotrimer of disulfide-linked F1-F2. In terms of processing, the inactive precursor F0 is glycosylated and proteolytically cleaved into F1 and F2 to be functionally active. The cleavage is mediated by cellular proteases during the transport and maturation of the polypeptide.

It localises to the virion membrane. The protein localises to the host cell membrane. Its function is as follows. Class I viral fusion protein. Under the current model, the protein has at least 3 conformational states: pre-fusion native state, pre-hairpin intermediate state, and post-fusion hairpin state. During viral and plasma cell membrane fusion, the heptad repeat (HR) regions assume a trimer-of-hairpins structure, positioning the fusion peptide in close proximity to the C-terminal region of the ectodomain. The formation of this structure appears to drive apposition and subsequent fusion of viral and plasma cell membranes. Directs fusion of viral and cellular membranes leading to delivery of the nucleocapsid into the cytoplasm. This fusion is pH independent and occurs directly at the outer cell membrane. The trimer of F1-F2 (F protein) probably interacts with HN at the virion surface. Upon HN binding to its cellular receptor, the hydrophobic fusion peptide is unmasked and interacts with the cellular membrane, inducing the fusion between cell and virion membranes. Later in infection, F proteins expressed at the plasma membrane of infected cells could mediate fusion with adjacent cells to form syncytia, a cytopathic effect that could lead to tissue necrosis. The protein is Fusion glycoprotein F0 (F) of Gallus gallus (Chicken).